The chain runs to 257 residues: Glucose-1-phosphate cytidylyltransferase (257 aa).

Substrate is bound by residues 6–10 (LAGGL), 11–13 (GTR), Lys23, Ser104, Arg109, and Gly128. Mg(2+) is bound by residues Asp129 and Asp234.

Belongs to the glucose-1-phosphate cytidylyltransferase family. As to quaternary structure, homohexamer. Mg(2+) serves as cofactor.

It catalyses the reaction alpha-D-glucose 1-phosphate + CTP + H(+) = CDP-D-glucose + diphosphate. Its pathway is nucleotide-sugar biosynthesis; CDP-3,6-dideoxy-D-mannose biosynthesis; CDP-3,6-dideoxy-D-mannose from CTP and alpha-D-glucose 1-phosphate: step 1/5. It participates in bacterial outer membrane biogenesis; LPS O-antigen biosynthesis. Functionally, involved in the biosynthesis of the tyvelose, a 3,6-dideoxyhexose found in the O-antigen of the surface lipopolysaccharides. It catalyzes the transfer of a CMP moiety from CTP to glucose 1-phosphate. In Salmonella typhimurium (strain LT2 / SGSC1412 / ATCC 700720), this protein is Glucose-1-phosphate cytidylyltransferase (rfbF).